The sequence spans 369 residues: MQHLNIHGHTLTLRRFPHKPGCPLQAWDAADALALTNHALPDGEILILNDHFGALACGLAYPERTLEWVNDSYMAHQALAQNLQLNRIETPLHRTPALAASPTNPVGILIKLPRMLQLLSSQLDWLNLHLPKGTPVVIAARQKDMPSTLPDLTRRLLDDVHPSRAEKKARLIFGQLSGRQSGQAEITAWHCAELDCLLSHYPNVFGRQKLDLGARVLLQNLGTIPDQVVDLGCGNGVLSIAALQRNPNSHVLAVDESWQATRSCQINLERVRTPEHFKVVWGHSLSFIEGMQADLVLCNPPFHQHQTLTDDIAWCMFKDAHRVLKPGGRLRMVGNRHLGYHAKLHKLFGHCRSIAATPKFVVLESVKSS.

Belongs to the methyltransferase superfamily. RlmG family.

The protein resides in the cytoplasm. It carries out the reaction guanosine(1835) in 23S rRNA + S-adenosyl-L-methionine = N(2)-methylguanosine(1835) in 23S rRNA + S-adenosyl-L-homocysteine + H(+). In terms of biological role, specifically methylates the guanine in position 1835 (m2G1835) of 23S rRNA. The chain is Ribosomal RNA large subunit methyltransferase G from Magnetococcus marinus (strain ATCC BAA-1437 / JCM 17883 / MC-1).